We begin with the raw amino-acid sequence, 103 residues long: Small ribosomal subunit protein bS6c (103 aa).

This sequence belongs to the bacterial ribosomal protein bS6 family.

Its subcellular location is the plastid. It localises to the chloroplast. Its function is as follows. Binds together with bS18 to 16S ribosomal RNA. The polypeptide is Small ribosomal subunit protein bS6c (rps6) (Cyanidium caldarium (Red alga)).